A 626-amino-acid chain; its full sequence is Phosphomethylpyrimidine synthase (626 aa).

Substrate-binding positions include asparagine 237, methionine 266, tyrosine 295, histidine 331, 351–353 (SRG), 392–395 (DGLR), and glutamate 431. Histidine 435 contacts Zn(2+). Tyrosine 458 serves as a coordination point for substrate. Histidine 499 provides a ligand contact to Zn(2+). Residues cysteine 579, cysteine 582, and cysteine 587 each contribute to the [4Fe-4S] cluster site.

This sequence belongs to the ThiC family. In terms of assembly, homodimer. [4Fe-4S] cluster serves as cofactor.

The catalysed reaction is 5-amino-1-(5-phospho-beta-D-ribosyl)imidazole + S-adenosyl-L-methionine = 4-amino-2-methyl-5-(phosphooxymethyl)pyrimidine + CO + 5'-deoxyadenosine + formate + L-methionine + 3 H(+). Its pathway is cofactor biosynthesis; thiamine diphosphate biosynthesis. Its function is as follows. Catalyzes the synthesis of the hydroxymethylpyrimidine phosphate (HMP-P) moiety of thiamine from aminoimidazole ribotide (AIR) in a radical S-adenosyl-L-methionine (SAM)-dependent reaction. The polypeptide is Phosphomethylpyrimidine synthase (Cupriavidus pinatubonensis (strain JMP 134 / LMG 1197) (Cupriavidus necator (strain JMP 134))).